A 333-amino-acid chain; its full sequence is Holliday junction branch migration complex subunit RuvB (333 aa).

The large ATPase domain (RuvB-L) stretch occupies residues 1 to 173; it reads MTAPENLDAA…FGIIEHLEYY (173 aa). Residues Leu-11, Arg-12, Gly-53, Lys-56, Thr-57, Thr-58, 120-122, Arg-163, Tyr-173, and Arg-210 each bind ATP; that span reads EDF. Mg(2+) is bound at residue Thr-57. Residues 174 to 244 form a small ATPAse domain (RuvB-S) region; the sequence is TAEEIATNLL…RAQSALDKLG (71 aa). The head domain (RuvB-H) stretch occupies residues 247-333; sequence SAGLDDRDKK…IDDGNGIFLN (87 aa). DNA contacts are provided by Arg-302 and Arg-307.

The protein belongs to the RuvB family. As to quaternary structure, homohexamer. Forms an RuvA(8)-RuvB(12)-Holliday junction (HJ) complex. HJ DNA is sandwiched between 2 RuvA tetramers; dsDNA enters through RuvA and exits via RuvB. An RuvB hexamer assembles on each DNA strand where it exits the tetramer. Each RuvB hexamer is contacted by two RuvA subunits (via domain III) on 2 adjacent RuvB subunits; this complex drives branch migration. In the full resolvosome a probable DNA-RuvA(4)-RuvB(12)-RuvC(2) complex forms which resolves the HJ.

It localises to the cytoplasm. It catalyses the reaction ATP + H2O = ADP + phosphate + H(+). Its function is as follows. The RuvA-RuvB-RuvC complex processes Holliday junction (HJ) DNA during genetic recombination and DNA repair, while the RuvA-RuvB complex plays an important role in the rescue of blocked DNA replication forks via replication fork reversal (RFR). RuvA specifically binds to HJ cruciform DNA, conferring on it an open structure. The RuvB hexamer acts as an ATP-dependent pump, pulling dsDNA into and through the RuvAB complex. RuvB forms 2 homohexamers on either side of HJ DNA bound by 1 or 2 RuvA tetramers; 4 subunits per hexamer contact DNA at a time. Coordinated motions by a converter formed by DNA-disengaged RuvB subunits stimulates ATP hydrolysis and nucleotide exchange. Immobilization of the converter enables RuvB to convert the ATP-contained energy into a lever motion, pulling 2 nucleotides of DNA out of the RuvA tetramer per ATP hydrolyzed, thus driving DNA branch migration. The RuvB motors rotate together with the DNA substrate, which together with the progressing nucleotide cycle form the mechanistic basis for DNA recombination by continuous HJ branch migration. Branch migration allows RuvC to scan DNA until it finds its consensus sequence, where it cleaves and resolves cruciform DNA. This Deinococcus radiodurans (strain ATCC 13939 / DSM 20539 / JCM 16871 / CCUG 27074 / LMG 4051 / NBRC 15346 / NCIMB 9279 / VKM B-1422 / R1) protein is Holliday junction branch migration complex subunit RuvB.